The chain runs to 428 residues: Enolase (428 aa).

Gln164 serves as a coordination point for (2R)-2-phosphoglycerate. Residue Glu206 is the Proton donor of the active site. Residues Asp243, Glu286, and Asp313 each contribute to the Mg(2+) site. Lys338, Arg367, Ser368, and Lys389 together coordinate (2R)-2-phosphoglycerate. Lys338 serves as the catalytic Proton acceptor.

It belongs to the enolase family. Mg(2+) serves as cofactor.

It is found in the cytoplasm. It localises to the secreted. The protein localises to the cell surface. It catalyses the reaction (2R)-2-phosphoglycerate = phosphoenolpyruvate + H2O. It functions in the pathway carbohydrate degradation; glycolysis; pyruvate from D-glyceraldehyde 3-phosphate: step 4/5. In terms of biological role, catalyzes the reversible conversion of 2-phosphoglycerate (2-PG) into phosphoenolpyruvate (PEP). It is essential for the degradation of carbohydrates via glycolysis. In Dehalococcoides mccartyi (strain ATCC BAA-2266 / KCTC 15142 / 195) (Dehalococcoides ethenogenes (strain 195)), this protein is Enolase.